A 351-amino-acid polypeptide reads, in one-letter code: D-glucoside 3-dehydrogenase (351 aa).

The protein belongs to the Gfo/Idh/MocA family.

The enzyme catalyses a D-glucoside + NAD(+) = a 3-dehydro-D-glucoside + NADH + H(+). Its function is as follows. Catalyzes the NADH-dependent reduction of the oxo group at C3 of 3-dehydro-D-glucosides leading to D-glucosides. Probably functions in a metabolic pathway that transforms D-gulosides to D-glucosides. Can use 3-dehydro-D-glucose, methyl alpha-3-dehydro-D-glucoside and methyl beta-3-dehydro-D-glucoside as substrates in vitro. However, the actual specific physiological substrates for this metabolic pathway are unknown. To a lesser extent, is also able to catalyze the reverse reactions, i.e. the NAD(+)-dependent oxidation of the hydroxyl group at C3 of D-glucosides leading to 3-dehydro-D-glucosides. Cannot act on UDP-glucose, UDP-N-acetyl-D-glucosamine, D-glucosamine, N-acetyl-D-glucosamine, or UDP-D-galactose. This Escherichia coli (strain K12) protein is D-glucoside 3-dehydrogenase (ycjS).